The primary structure comprises 199 residues: FMN-dependent NADH:quinone oxidoreductase (199 aa).

Residues S10, 16–18 (SVS), and 96–99 (MYNF) each bind FMN.

It belongs to the azoreductase type 1 family. Homodimer. It depends on FMN as a cofactor.

It catalyses the reaction 2 a quinone + NADH + H(+) = 2 a 1,4-benzosemiquinone + NAD(+). It carries out the reaction N,N-dimethyl-1,4-phenylenediamine + anthranilate + 2 NAD(+) = 2-(4-dimethylaminophenyl)diazenylbenzoate + 2 NADH + 2 H(+). In terms of biological role, quinone reductase that provides resistance to thiol-specific stress caused by electrophilic quinones. Functionally, also exhibits azoreductase activity. Catalyzes the reductive cleavage of the azo bond in aromatic azo compounds to the corresponding amines. This chain is FMN-dependent NADH:quinone oxidoreductase, found in Azotobacter vinelandii (strain DJ / ATCC BAA-1303).